The following is a 220-amino-acid chain: Nitrile hydratase subunit beta (220 aa).

It belongs to the nitrile hydratase subunit beta family. In terms of assembly, heterodimer of an alpha and a beta chain.

It carries out the reaction an aliphatic primary amide = an aliphatic nitrile + H2O. Its function is as follows. NHase catalyzes the hydration of various nitrile compounds to the corresponding amides. The chain is Nitrile hydratase subunit beta (nthB) from Pseudomonas chlororaphis (Pseudomonas aureofaciens).